The sequence spans 370 residues: Anthranilate phosphoribosyltransferase (370 aa).

5-phospho-alpha-D-ribose 1-diphosphate contacts are provided by residues Gly82, 85–86, Thr90, 92–95, 110–118, and Ser122; these read GD, NVST, and KHGNRAATS. Gly82 contacts anthranilate. Ser94 serves as a coordination point for Mg(2+). Asn113 lines the anthranilate pocket. Arg168 provides a ligand contact to anthranilate. Positions 226 and 227 each coordinate Mg(2+).

Belongs to the anthranilate phosphoribosyltransferase family. In terms of assembly, homodimer. Mg(2+) serves as cofactor.

The catalysed reaction is N-(5-phospho-beta-D-ribosyl)anthranilate + diphosphate = 5-phospho-alpha-D-ribose 1-diphosphate + anthranilate. It participates in amino-acid biosynthesis; L-tryptophan biosynthesis; L-tryptophan from chorismate: step 2/5. Catalyzes the transfer of the phosphoribosyl group of 5-phosphorylribose-1-pyrophosphate (PRPP) to anthranilate to yield N-(5'-phosphoribosyl)-anthranilate (PRA). In Methanosarcina acetivorans (strain ATCC 35395 / DSM 2834 / JCM 12185 / C2A), this protein is Anthranilate phosphoribosyltransferase.